The following is a 444-amino-acid chain: Glycerol-3-phosphate transporter (444 aa).

Residues 1–36 (MLNIFKPAPHIERLDDSKMDAAYKRLRLQVFIGIFI) are Cytoplasmic-facing. Residues 37-57 (GYAGYYLLRKNFAFAIPYLQE) form a helical membrane-spanning segment. Over 58–63 (QGFSKT) the chain is Extracellular. The helical transmembrane segment at 64–84 (ELGLVLAAVSIAYGFSKFIMG) threads the bilayer. The Cytoplasmic portion of the chain corresponds to 85–93 (MVSDRCNPR). The chain crosses the membrane as a helical span at residues 94 to 112 (YFLATGLFLSAIVNILFVS). Residues 113-120 (MPWVTSSV) lie on the Extracellular side of the membrane. The helical transmembrane segment at 121 to 141 (TIMFIFMFINGWFQGMGWPPC) threads the bilayer. At 142-160 (GRTMAHWFSISERGTKMSI) the chain is on the cytoplasmic side. Residues 161 to 180 (WNVAHNIGGGILAPLVTLGI) form a helical membrane-spanning segment. Over 181–189 (AMFVTWKSV) the chain is Extracellular. A helical transmembrane segment spans residues 190–207 (FFFPAIIAIIISFLIVLL). At 208-261 (VRDTPQSCGLPPIEEYRNDYPKHAFKNQEKELTTKEILFQYVLNNKFLWYIAFA) the chain is on the cytoplasmic side. A helical membrane pass occupies residues 262 to 282 (NVFVYFVRYGVVDWAPTYLTE). The Extracellular portion of the chain corresponds to 283–287 (AKGFS). A helical membrane pass occupies residues 288-308 (PEDSRWSYFLYEYAGIPGTIL). The Cytoplasmic portion of the chain corresponds to 309–321 (CGWISDRFFKSRR). Residues 322 to 341 (APAGVLFMAGVFIAVLVYWL) form a helical membrane-spanning segment. The Extracellular portion of the chain corresponds to 342-346 (NPAGN). The helical transmembrane segment at 347 to 368 (PLVDNIALISIGFLIYGPVMLI) threads the bilayer. The Cytoplasmic portion of the chain corresponds to 369–387 (GLQAIDLAPKKAAGTAAGL). Residues 388–409 (TGFFGYIGGSAFANAIMGFVVD) traverse the membrane as a helical segment. Topologically, residues 410–414 (RFNWN) are extracellular. Residues 415 to 435 (GGFIMLISSCILAIVFLALTW) traverse the membrane as a helical segment. The Cytoplasmic portion of the chain corresponds to 436–444 (NTGKRAEHV).

Belongs to the major facilitator superfamily. Organophosphate:Pi antiporter (OPA) (TC 2.A.1.4) family.

It is found in the cell membrane. Its function is as follows. Responsible for glycerol-3-phosphate uptake. This Bacillus subtilis (strain 168) protein is Glycerol-3-phosphate transporter (glpT).